An 831-amino-acid chain; its full sequence is Protein translocase subunit SecA (831 aa).

ATP-binding positions include Q88, 106–110 (GEGKT), and D495. The Zn(2+) site is built by C816, C818, C827, and C828.

The protein belongs to the SecA family. Monomer and homodimer. Part of the essential Sec protein translocation apparatus which comprises SecA, SecYEG and auxiliary proteins SecDF-YajC and YidC. Requires Zn(2+) as cofactor.

The protein resides in the cell membrane. It localises to the cytoplasm. It catalyses the reaction ATP + H2O + cellular proteinSide 1 = ADP + phosphate + cellular proteinSide 2.. Its function is as follows. Part of the Sec protein translocase complex. Interacts with the SecYEG preprotein conducting channel. Has a central role in coupling the hydrolysis of ATP to the transfer of proteins into and across the cell membrane, serving as an ATP-driven molecular motor driving the stepwise translocation of polypeptide chains across the membrane. In Lawsonia intracellularis (strain PHE/MN1-00), this protein is Protein translocase subunit SecA.